The sequence spans 628 residues: 1-deoxy-D-xylulose-5-phosphate synthase (628 aa).

Thiamine diphosphate contacts are provided by residues His-72 and 113-115; that span reads GHS. Asp-144 contributes to the Mg(2+) binding site. Thiamine diphosphate-binding positions include 145 to 146, Asn-173, Tyr-284, and Glu-367; that span reads GA. Asn-173 is a binding site for Mg(2+).

This sequence belongs to the transketolase family. DXPS subfamily. In terms of assembly, homodimer. It depends on Mg(2+) as a cofactor. Thiamine diphosphate is required as a cofactor.

It carries out the reaction D-glyceraldehyde 3-phosphate + pyruvate + H(+) = 1-deoxy-D-xylulose 5-phosphate + CO2. Its pathway is metabolic intermediate biosynthesis; 1-deoxy-D-xylulose 5-phosphate biosynthesis; 1-deoxy-D-xylulose 5-phosphate from D-glyceraldehyde 3-phosphate and pyruvate: step 1/1. Its function is as follows. Catalyzes the acyloin condensation reaction between C atoms 2 and 3 of pyruvate and glyceraldehyde 3-phosphate to yield 1-deoxy-D-xylulose-5-phosphate (DXP). This Exiguobacterium sibiricum (strain DSM 17290 / CCUG 55495 / CIP 109462 / JCM 13490 / 255-15) protein is 1-deoxy-D-xylulose-5-phosphate synthase.